Reading from the N-terminus, the 258-residue chain is Acetylglutamate kinase (258 aa).

Residues 41 to 42 (GG), Arg-63, and Asn-156 contribute to the substrate site.

This sequence belongs to the acetylglutamate kinase family. ArgB subfamily.

The protein localises to the cytoplasm. The enzyme catalyses N-acetyl-L-glutamate + ATP = N-acetyl-L-glutamyl 5-phosphate + ADP. The protein operates within amino-acid biosynthesis; L-arginine biosynthesis; N(2)-acetyl-L-ornithine from L-glutamate: step 2/4. Its function is as follows. Catalyzes the ATP-dependent phosphorylation of N-acetyl-L-glutamate. The chain is Acetylglutamate kinase from Bacillus pumilus (strain SAFR-032).